Consider the following 305-residue polypeptide: UDP-3-O-acyl-N-acetylglucosamine deacetylase (305 aa).

Residues His-79, His-238, and Asp-242 each coordinate Zn(2+). Catalysis depends on His-265, which acts as the Proton donor.

The protein belongs to the LpxC family. Requires Zn(2+) as cofactor.

It catalyses the reaction a UDP-3-O-[(3R)-3-hydroxyacyl]-N-acetyl-alpha-D-glucosamine + H2O = a UDP-3-O-[(3R)-3-hydroxyacyl]-alpha-D-glucosamine + acetate. It functions in the pathway glycolipid biosynthesis; lipid IV(A) biosynthesis; lipid IV(A) from (3R)-3-hydroxytetradecanoyl-[acyl-carrier-protein] and UDP-N-acetyl-alpha-D-glucosamine: step 2/6. Its function is as follows. Catalyzes the hydrolysis of UDP-3-O-myristoyl-N-acetylglucosamine to form UDP-3-O-myristoylglucosamine and acetate, the committed step in lipid A biosynthesis. The polypeptide is UDP-3-O-acyl-N-acetylglucosamine deacetylase (Vibrio campbellii (strain ATCC BAA-1116)).